Reading from the N-terminus, the 124-residue chain is Small ribosomal subunit protein bS6 (124 aa).

The segment at 96 to 124 is disordered; it reads ETGPSPMMKEVQREEAKKAAAAQPAEAQA. The segment covering 114 to 124 has biased composition (low complexity); it reads AAAAQPAEAQA.

This sequence belongs to the bacterial ribosomal protein bS6 family.

Its function is as follows. Binds together with bS18 to 16S ribosomal RNA. This is Small ribosomal subunit protein bS6 from Burkholderia orbicola (strain MC0-3).